We begin with the raw amino-acid sequence, 196 residues long: dITP/XTP pyrophosphatase (196 aa).

Residue 8 to 13 (TKNEGK) coordinates substrate. Mg(2+) is bound by residues E41 and D70. D70 acts as the Proton acceptor in catalysis. Substrate is bound by residues S71, 153–156 (FGYD), K176, and 181–182 (HR).

The protein belongs to the HAM1 NTPase family. In terms of assembly, homodimer. Mg(2+) serves as cofactor.

The catalysed reaction is XTP + H2O = XMP + diphosphate + H(+). It carries out the reaction dITP + H2O = dIMP + diphosphate + H(+). It catalyses the reaction ITP + H2O = IMP + diphosphate + H(+). In terms of biological role, pyrophosphatase that catalyzes the hydrolysis of nucleoside triphosphates to their monophosphate derivatives, with a high preference for the non-canonical purine nucleotides XTP (xanthosine triphosphate), dITP (deoxyinosine triphosphate) and ITP. Seems to function as a house-cleaning enzyme that removes non-canonical purine nucleotides from the nucleotide pool, thus preventing their incorporation into DNA/RNA and avoiding chromosomal lesions. This is dITP/XTP pyrophosphatase from Bacillus licheniformis (strain ATCC 14580 / DSM 13 / JCM 2505 / CCUG 7422 / NBRC 12200 / NCIMB 9375 / NCTC 10341 / NRRL NRS-1264 / Gibson 46).